Here is a 702-residue protein sequence, read N- to C-terminus: Polyribonucleotide nucleotidyltransferase (702 aa).

Residues Asp-493 and Asp-499 each coordinate Mg(2+). The KH domain maps to 559-619 (PKVEIFNVDP…NLISQSKEYI (61 aa)). The S1 motif domain occupies 643–702 (GEEFLGRVQKVVEFGVFVELKEGVDGLLHNSKIKEKLEVGHEIKVKVAEIKNGKVSLDLA).

It belongs to the polyribonucleotide nucleotidyltransferase family. It depends on Mg(2+) as a cofactor.

The protein localises to the cytoplasm. The catalysed reaction is RNA(n+1) + phosphate = RNA(n) + a ribonucleoside 5'-diphosphate. Involved in mRNA degradation. Catalyzes the phosphorolysis of single-stranded polyribonucleotides processively in the 3'- to 5'-direction. The protein is Polyribonucleotide nucleotidyltransferase of Campylobacter lari (strain RM2100 / D67 / ATCC BAA-1060).